Consider the following 228-residue polypeptide: MTKGILGRKVGMTQVFTESGELIAVTAVEATPNVVLQVKNAETDGYSAIQLGYQDKRTVLSNKPEQGHASKANTAPKRYVREIRNAGDEFNVGDEIKVDTFQAGEYVDVTGITKGHGFQGAIKRLGQSRGPMTHGSRYHRRPGSMGAIINRVFKGKLLPGRMGNNKRTMQNIAIVHVDVENNLLLLKGNVPGANKSLLTVKSTVKVNAKHPEVKMANASASATNSEEA.

It belongs to the universal ribosomal protein uL3 family. As to quaternary structure, part of the 50S ribosomal subunit. Forms a cluster with proteins L14 and L19.

In terms of biological role, one of the primary rRNA binding proteins, it binds directly near the 3'-end of the 23S rRNA, where it nucleates assembly of the 50S subunit. The polypeptide is Large ribosomal subunit protein uL3 (Leuconostoc mesenteroides subsp. mesenteroides (strain ATCC 8293 / DSM 20343 / BCRC 11652 / CCM 1803 / JCM 6124 / NCDO 523 / NBRC 100496 / NCIMB 8023 / NCTC 12954 / NRRL B-1118 / 37Y)).